Consider the following 338-residue polypeptide: tRNA-specific 2-thiouridylase MnmA (338 aa).

Residues 6–13 (ALSGGVDS) and Met32 each bind ATP. Residue Cys92 is the Nucleophile of the active site. A disulfide bond links Cys92 and Cys186. Gly116 is a binding site for ATP. Residues 134 to 136 (KDQ) form an interaction with tRNA region. Cys186 functions as the Cysteine persulfide intermediate in the catalytic mechanism. Residues 288-289 (RY) form an interaction with tRNA region.

The protein belongs to the MnmA/TRMU family.

The protein resides in the cytoplasm. It catalyses the reaction S-sulfanyl-L-cysteinyl-[protein] + uridine(34) in tRNA + AH2 + ATP = 2-thiouridine(34) in tRNA + L-cysteinyl-[protein] + A + AMP + diphosphate + H(+). Functionally, catalyzes the 2-thiolation of uridine at the wobble position (U34) of tRNA, leading to the formation of s(2)U34. This is tRNA-specific 2-thiouridylase MnmA from Campylobacter fetus subsp. fetus (strain 82-40).